A 129-amino-acid polypeptide reads, in one-letter code: Small ribosomal subunit protein uS11 (129 aa).

The protein belongs to the universal ribosomal protein uS11 family. As to quaternary structure, part of the 30S ribosomal subunit. Interacts with proteins S7 and S18. Binds to IF-3.

Functionally, located on the platform of the 30S subunit, it bridges several disparate RNA helices of the 16S rRNA. Forms part of the Shine-Dalgarno cleft in the 70S ribosome. The chain is Small ribosomal subunit protein uS11 from Pelotomaculum thermopropionicum (strain DSM 13744 / JCM 10971 / SI).